The following is a 369-amino-acid chain: MKNISITNRKIEHVEICLYENVEFGSTLFEDVTLIHQSLPGFSLADVSTTTNFLGKKMSAPIIITGMTGGLPELGKINETIAEVIEELGLGMGVGSQRIAIEKKETKETFSIVRKKAPNSPIIANLGAPQFVKGYSLEQVEEAIQMIEADAIAIHFNSAQEVFQPEGEPNYSIEILYKLIDISKSLKVPIIIKESGSGLSMEVTKMFYENGIKYFDTSGTGGTSWVSVEMYRGLRRNNWKAESAKLFLDWGIPTAASIVEVRSIAQDGTIIGSGGVRNGLEVAKAIALGADIGGFALPALKAAVKGKESLMNFLKKVIFELKVAMFLSGNKTIGELKKTPIVIGKELRNWLDSRGINLSYYDSVRKRRV.

9 to 10 lines the substrate pocket; that stretch reads RK. Residues Thr-65, 66-68, Ser-96, and Asn-125 contribute to the FMN site; that span reads GMT. 96 to 98 contributes to the substrate binding site; it reads SQR. Residue Gln-160 participates in substrate binding. Glu-161 is a Mg(2+) binding site. FMN contacts are provided by residues Lys-193, Ser-218, Thr-223, 275 to 277, and 296 to 297; these read GVR and AL.

It belongs to the IPP isomerase type 2 family. Homooctamer. Dimer of tetramers. FMN is required as a cofactor. NADPH serves as cofactor. It depends on Mg(2+) as a cofactor.

It is found in the cytoplasm. The enzyme catalyses isopentenyl diphosphate = dimethylallyl diphosphate. In terms of biological role, involved in the biosynthesis of isoprenoids. Catalyzes the 1,3-allylic rearrangement of the homoallylic substrate isopentenyl (IPP) to its allylic isomer, dimethylallyl diphosphate (DMAPP). The chain is Isopentenyl-diphosphate delta-isomerase from Sulfurisphaera tokodaii (strain DSM 16993 / JCM 10545 / NBRC 100140 / 7) (Sulfolobus tokodaii).